Reading from the N-terminus, the 398-residue chain is Succinate--CoA ligase [ADP-forming] subunit beta (398 aa).

Residues 9-254 (KALLKSFGAP…KTEEDAKEIE (246 aa)) enclose the ATP-grasp domain. Residues K46, 53-55 (GRG), E109, A112, and E117 each bind ATP. Mg(2+) is bound by residues N209 and D223. Substrate is bound by residues N274 and 331–333 (GIM).

The protein belongs to the succinate/malate CoA ligase beta subunit family. As to quaternary structure, heterotetramer of two alpha and two beta subunits. The cofactor is Mg(2+).

The enzyme catalyses succinate + ATP + CoA = succinyl-CoA + ADP + phosphate. It carries out the reaction GTP + succinate + CoA = succinyl-CoA + GDP + phosphate. The protein operates within carbohydrate metabolism; tricarboxylic acid cycle; succinate from succinyl-CoA (ligase route): step 1/1. Its function is as follows. Succinyl-CoA synthetase functions in the citric acid cycle (TCA), coupling the hydrolysis of succinyl-CoA to the synthesis of either ATP or GTP and thus represents the only step of substrate-level phosphorylation in the TCA. The beta subunit provides nucleotide specificity of the enzyme and binds the substrate succinate, while the binding sites for coenzyme A and phosphate are found in the alpha subunit. The chain is Succinate--CoA ligase [ADP-forming] subunit beta from Allorhizobium ampelinum (strain ATCC BAA-846 / DSM 112012 / S4) (Agrobacterium vitis (strain S4)).